Consider the following 170-residue polypeptide: Calcineurin subunit B type 2 (170 aa).

A lipid anchor (N-myristoyl glycine) is attached at Gly2. 4 consecutive EF-hand domains span residues 18-46 (DEIK…FMSL), 50-85 (RHNP…FSVK), 87-122 (DEEQ…MVGN), and 128-163 (QLQQ…LEIH). The Ca(2+) site is built by Asp31, Asp33, Ser35, Ser37, Glu42, Asp63, Asp65, Asp67, Glu69, Glu74, Asp100, Asp102, Asp104, Tyr106, and Glu111. The interval 131–136 (QLVDKT) is calcineurin A binding. Residues Asp141, Asp143, Asp145, Lys147, and Glu152 each coordinate Ca(2+).

It belongs to the calcineurin regulatory subunit family. In terms of assembly, forms a complex composed of a calmodulin-dependent catalytic subunit (also known as calcineurin A) and a regulatory Ca(2+)-binding subunit (also known as calcineurin B). There are three catalytic subunits, each encoded by a separate gene (PPP3CA, PPP3CB, and PPP3CC) and two regulatory subunits which are also encoded by separate genes (PPP3R1 and PPP3R2). Interacts with SPATA33 (via PQIIIT motif). As to expression, testis-specific.

Its subcellular location is the mitochondrion. Regulatory subunit of calcineurin, a calcium-dependent, calmodulin stimulated protein phosphatase. Confers calcium sensitivity. This is Calcineurin subunit B type 2 (PPP3R2) from Homo sapiens (Human).